A 185-amino-acid chain; its full sequence is Acireductone dioxygenase (185 aa).

Positions 1 to 23 (MSRLSIHPEGNTNATSPAEPLLE) are disordered. Fe(2+) is bound by residues H102, H104, E108, and H146. Ni(2+) contacts are provided by H102, H104, E108, and H146.

The protein belongs to the acireductone dioxygenase (ARD) family. In terms of assembly, monomer. Requires Fe(2+) as cofactor. The cofactor is Ni(2+).

The enzyme catalyses 1,2-dihydroxy-5-(methylsulfanyl)pent-1-en-3-one + O2 = 3-(methylsulfanyl)propanoate + CO + formate + 2 H(+). The catalysed reaction is 1,2-dihydroxy-5-(methylsulfanyl)pent-1-en-3-one + O2 = 4-methylsulfanyl-2-oxobutanoate + formate + 2 H(+). It participates in amino-acid biosynthesis; L-methionine biosynthesis via salvage pathway; L-methionine from S-methyl-5-thio-alpha-D-ribose 1-phosphate: step 5/6. Functionally, catalyzes 2 different reactions between oxygen and the acireductone 1,2-dihydroxy-3-keto-5-methylthiopentene (DHK-MTPene) depending upon the metal bound in the active site. Fe-containing acireductone dioxygenase (Fe-ARD) produces formate and 2-keto-4-methylthiobutyrate (KMTB), the alpha-ketoacid precursor of methionine in the methionine recycle pathway. Ni-containing acireductone dioxygenase (Ni-ARD) produces methylthiopropionate, carbon monoxide and formate, and does not lie on the methionine recycle pathway. This Prochlorococcus marinus (strain MIT 9303) protein is Acireductone dioxygenase.